A 390-amino-acid polypeptide reads, in one-letter code: Queuine tRNA-ribosyltransferase (390 aa).

Asp-92 functions as the Proton acceptor in the catalytic mechanism. Residues 92 to 96 (DSGGF), Asp-146, Gln-195, and Gly-222 each bind substrate. Positions 253 to 259 (GVGTPED) are RNA binding. Asp-272 (nucleophile) is an active-site residue. The segment at 277–281 (TRNAR) is RNA binding; important for wobble base 34 recognition. 4 residues coordinate Zn(2+): Cys-310, Cys-312, Cys-315, and His-354.

The protein belongs to the queuine tRNA-ribosyltransferase family. Homodimer. Within each dimer, one monomer is responsible for RNA recognition and catalysis, while the other monomer binds to the replacement base PreQ1. It depends on Zn(2+) as a cofactor.

The enzyme catalyses 7-aminomethyl-7-carbaguanine + guanosine(34) in tRNA = 7-aminomethyl-7-carbaguanosine(34) in tRNA + guanine. Its pathway is tRNA modification; tRNA-queuosine biosynthesis. Catalyzes the base-exchange of a guanine (G) residue with the queuine precursor 7-aminomethyl-7-deazaguanine (PreQ1) at position 34 (anticodon wobble position) in tRNAs with GU(N) anticodons (tRNA-Asp, -Asn, -His and -Tyr). Catalysis occurs through a double-displacement mechanism. The nucleophile active site attacks the C1' of nucleotide 34 to detach the guanine base from the RNA, forming a covalent enzyme-RNA intermediate. The proton acceptor active site deprotonates the incoming PreQ1, allowing a nucleophilic attack on the C1' of the ribose to form the product. After dissociation, two additional enzymatic reactions on the tRNA convert PreQ1 to queuine (Q), resulting in the hypermodified nucleoside queuosine (7-(((4,5-cis-dihydroxy-2-cyclopenten-1-yl)amino)methyl)-7-deazaguanosine). This chain is Queuine tRNA-ribosyltransferase, found in Acidovorax sp. (strain JS42).